We begin with the raw amino-acid sequence, 238 residues long: Ribonuclease PH (238 aa).

Phosphate is bound by residues arginine 86 and 124–126 (GTR).

The protein belongs to the RNase PH family. Homohexameric ring arranged as a trimer of dimers.

The enzyme catalyses tRNA(n+1) + phosphate = tRNA(n) + a ribonucleoside 5'-diphosphate. Phosphorolytic 3'-5' exoribonuclease that plays an important role in tRNA 3'-end maturation. Removes nucleotide residues following the 3'-CCA terminus of tRNAs; can also add nucleotides to the ends of RNA molecules by using nucleoside diphosphates as substrates, but this may not be physiologically important. Probably plays a role in initiation of 16S rRNA degradation (leading to ribosome degradation) during starvation. The protein is Ribonuclease PH of Brucella anthropi (strain ATCC 49188 / DSM 6882 / CCUG 24695 / JCM 21032 / LMG 3331 / NBRC 15819 / NCTC 12168 / Alc 37) (Ochrobactrum anthropi).